The sequence spans 171 residues: uncharacterized protein (171 aa).

It to M.jannaschii MJ0417.

This is an uncharacterized protein from Methanocaldococcus jannaschii (strain ATCC 43067 / DSM 2661 / JAL-1 / JCM 10045 / NBRC 100440) (Methanococcus jannaschii).